The following is a 272-amino-acid chain: HMP-PP phosphatase (272 aa).

The Nucleophile role is filled by Asp-8. Mg(2+) is bound by residues Asp-8, Asp-10, and Asp-212.

Belongs to the HAD-like hydrolase superfamily. Cof family. Mg(2+) serves as cofactor.

The enzyme catalyses 4-amino-2-methyl-5-(diphosphooxymethyl)pyrimidine + H2O = 4-amino-2-methyl-5-(phosphooxymethyl)pyrimidine + phosphate + H(+). Functionally, catalyzes the hydrolysis of 4-amino-2-methyl-5-hydroxymethylpyrimidine pyrophosphate (HMP-PP) to 4-amino-2-methyl-5-hydroxymethylpyrimidine phosphate (HMP-P). The polypeptide is HMP-PP phosphatase (Citrobacter koseri (strain ATCC BAA-895 / CDC 4225-83 / SGSC4696)).